A 176-amino-acid polypeptide reads, in one-letter code: Ribosome maturation factor RimM (176 aa).

The region spanning 92–165 (EDEFLYSDLI…RLVVVPPVYA (74 aa)) is the PRC barrel domain.

This sequence belongs to the RimM family. As to quaternary structure, binds ribosomal protein uS19.

The protein resides in the cytoplasm. Its function is as follows. An accessory protein needed during the final step in the assembly of 30S ribosomal subunit, possibly for assembly of the head region. Essential for efficient processing of 16S rRNA. May be needed both before and after RbfA during the maturation of 16S rRNA. It has affinity for free ribosomal 30S subunits but not for 70S ribosomes. In Paramagnetospirillum magneticum (strain ATCC 700264 / AMB-1) (Magnetospirillum magneticum), this protein is Ribosome maturation factor RimM.